Reading from the N-terminus, the 218-residue chain is Insulin-induced gene 2 protein (218 aa).

The Cytoplasmic portion of the chain corresponds to 1–21; the sequence is MGDRENVSYGSRPILAQKMNL. A helical transmembrane segment spans residues 22 to 44; that stretch reads LLRGFLLFLIGVFLALVLNLLQV. Over 45–63 the chain is Lumenal; it reads QRNVTLFPPDVLSSLFSSA. A helical transmembrane segment spans residues 64-81; it reads WWVPLCCGTAAAAIGLLY. Residues 82-96 lie on the Cytoplasmic side of the membrane; that stretch reads PCIDRHLGEPHKFKR. A helical transmembrane segment spans residues 97-119; the sequence is EWSSVMRCVAVFVGINHASAKVD. At 120–122 the chain is on the lumenal side; that stretch reads FAN. A helical membrane pass occupies residues 123–141; sequence NMQLSLTLAALSIGLWWTF. Over 142-146 the chain is Cytoplasmic; it reads DRSRS. The chain crosses the membrane as a helical span at residues 147–168; it reads GLGLGIGISFFATLVSQLLVYN. At 169–182 the chain is on the lumenal side; it reads GVYEYTAPDFLYVR. The helical transmembrane segment at 183–200 threads the bilayer; it reads SWLPCIFFAGGITMGNIG. The Cytoplasmic portion of the chain corresponds to 201–218; sequence RQLEMYERKALVEKSHRD. Residues 212-218 carry the KxHxx motif; sequence VEKSHRD.

It belongs to the INSIG family. As to quaternary structure, interacts with scap; interaction is direct and only takes place in the presence of sterols; it prevents interaction between scap and the coat protein complex II (COPII). Associates with the SCAP-SREBP complex; association is mediated via its interaction with scap and only takes place in the presence of sterols.

It is found in the endoplasmic reticulum membrane. Functionally, oxysterol-binding protein that mediates feedback control of cholesterol synthesis by controlling both endoplasmic reticulum to Golgi transport of scap and degradation of hmgcr. Acts as a negative regulator of cholesterol biosynthesis by mediating the retention of the SCAP-SREBP complex in the endoplasmic reticulum, thereby blocking the processing of sterol regulatory element-binding proteins (SREBPs). Binds oxysterol, including 22-hydroxycholesterol, 24-hydroxycholesterol, 25-hydroxycholesterol and 27-hydroxycholesterol, regulating interaction with scap and retention of the SCAP-SREBP complex in the endoplasmic reticulum. In presence of oxysterol, interacts with scap, retaining the SCAP-SREBP complex in the endoplasmic reticulum, thereby preventing scap from escorting SREBPs to the Golgi. Sterol deprivation reduce oxysterol-binding, disrupting the interaction between insig2 and scap, thereby promoting Golgi transport of the SCAP-SREBP complex, followed by processing and nuclear translocation of SREBPs. Also regulates cholesterol synthesis by regulating degradation of hmgcr. In Xenopus laevis (African clawed frog), this protein is Insulin-induced gene 2 protein.